The primary structure comprises 756 residues: Cilium assembly protein DZIP1L (756 aa).

Positions 1-20 (MLGQFSPGEPYTTSLSSTPP) are disordered. Residues 10–19 (PYTTSLSSTP) show a composition bias toward low complexity. Residues 108–158 (DFLSSQLAGLEERLQAATSLVQQGEGQRAELEKSLQETKQENRRRKQLIAT) adopt a coiled-coil conformation. Residues 171–194 (HKCQFCEKSFVNYSYLQAHVQRRH) form a C2H2-type zinc finger. Basic and acidic residues-rich tracts occupy residues 193 to 202 (RHPEVTDAEK), 237 to 262 (NLRR…ERWK), 319 to 335 (DPEK…LRER), and 344 to 365 (RRKF…KSEN). Disordered stretches follow at residues 193–212 (RHPE…EEME), 233–262 (QQAD…ERWK), 310–365 (NNAS…KSEN), 409–466 (KIKK…MRES), 531–626 (VKSL…AYIT), and 693–756 (IKTP…GTSA). Coiled-coil stretches lie at residues 196 to 283 (EVTD…FLQE) and 321 to 416 (EKEM…LSAT). Positions 534–558 (LQKSSGKPTPNTLKQRGKKTSTPLN) are enriched in polar residues. Basic and acidic residues predominate over residues 560 to 578 (KSLRFRQDSKASDRREKSQ). Residues 586–598 (TPTPRSKAPPPNQ) are compositionally biased toward pro residues.

The protein belongs to the DZIP C2H2-type zinc-finger protein family.

It localises to the cytoplasm. The protein localises to the cytoskeleton. Its subcellular location is the cilium basal body. It is found in the microtubule organizing center. The protein resides in the centrosome. It localises to the centriole. Involved in primary cilium formation. Probably acts as a transition zone protein required for localization of PKD1/PC1 and PKD2/PC2 to the ciliary membrane. This is Cilium assembly protein DZIP1L (dzip1l) from Danio rerio (Zebrafish).